A 477-amino-acid chain; its full sequence is Glutamate--tRNA ligase (477 aa).

The 'HIGH' region motif lies at 8–18 (PSPTGTLHIGT). The 'KMSKS' region signature appears at 247 to 251 (KLSKR). Lys250 lines the ATP pocket.

Belongs to the class-I aminoacyl-tRNA synthetase family. Glutamate--tRNA ligase type 1 subfamily. In terms of assembly, monomer.

The protein resides in the cytoplasm. It catalyses the reaction tRNA(Glu) + L-glutamate + ATP = L-glutamyl-tRNA(Glu) + AMP + diphosphate. Catalyzes the attachment of glutamate to tRNA(Glu) in a two-step reaction: glutamate is first activated by ATP to form Glu-AMP and then transferred to the acceptor end of tRNA(Glu). This is Glutamate--tRNA ligase from Parasynechococcus marenigrum (strain WH8102).